We begin with the raw amino-acid sequence, 420 residues long: Putative U-box domain-containing protein 58 (420 aa).

An MIF4G domain is found at 4-168; that stretch reads NSYVLFARLC…EDALAMKKED (165 aa). Positions 139-352 form a coiled coil; it reads SRVVELEGNY…TAKEQMEKRQ (214 aa). In terms of domain architecture, U-box spans 352 to 420; sequence QPPSSFFCPI…ALRSAIEELV (69 aa).

It carries out the reaction S-ubiquitinyl-[E2 ubiquitin-conjugating enzyme]-L-cysteine + [acceptor protein]-L-lysine = [E2 ubiquitin-conjugating enzyme]-L-cysteine + N(6)-ubiquitinyl-[acceptor protein]-L-lysine.. It participates in protein modification; protein ubiquitination. Functions as an E3 ubiquitin ligase. This Arabidopsis thaliana (Mouse-ear cress) protein is Putative U-box domain-containing protein 58 (PUB58).